Here is a 324-residue protein sequence, read N- to C-terminus: Disintegrin-like/cysteine-rich protein MPIII-3 (324 aa).

Residues 1 to 20 (MIQVLLVIICLAVFPYQVSS) form the signal peptide. Positions 21–173 (IILESGNINN…DEDPKKCEFR (153 aa)) are cleaved as a propeptide — or 174 (in a minor form). The 40-residue stretch at 168–207 (KKCEFRRAGTECRPARSECDVAEYCTGQSAECPTDVFHSN) folds into the Disintegrin; truncated domain. Residues 179-192 (CRPARSECDVAEYC) form an inhibits platelet aggregation region. 9 disulfide bridges follow: cysteine 179-cysteine 199, cysteine 186-cysteine 218, cysteine 192-cysteine 199, cysteine 211-cysteine 223, cysteine 230-cysteine 280, cysteine 245-cysteine 287, cysteine 258-cysteine 268, cysteine 275-cysteine 312, and cysteine 306-cysteine 317. The D/ECD-tripeptide motif lies at 185-187 (ECD). Positions 187 and 190 each coordinate Ca(2+). Ca(2+)-binding residues include aspartate 202 and valine 203. N-linked (GlcNAc...) asparagine glycosylation occurs at asparagine 237.

Belongs to the venom metalloproteinase (M12B) family. P-III subfamily. P-IIIe sub-subfamily. Monomer. Is able to form a homodimer. N-glycosylated. Exists in at least six differently N-glycosylated forms. The glycans likely have a stabilizing purpose. In terms of processing, cys-199 forms a disulfide bond with Cys-192 in 90% and with Cys-179 in 10% of the protein molecules; alternative disulfide bonds may have a major effect on the conformation of the protein. As to expression, expressed by the venom gland (at protein level). Expressed by the venom gland.

The protein resides in the secreted. Activity may be regulated by the intramolecular thiol-disulfide exchange or disulfide bond switching. In terms of biological role, abolishes platelet aggregation induced by collagen, ADP (IC(50)=292 nM) and arachidonic-acid. The inhibition of collagen-induced platelet aggregation may be due to its ability to bind collagen and block the binding site on collagen for platelets and/or to its ability to bind to the platelet alpha-2/beta-1 collagen receptor (ITGA2/ITGB1) to block its interaction with collagen and hence prevent platelet stimulation. The inhibition of ADP- or arachidonic-acid-induced platelet aggregation may be due to it acting as an antagonist of the ADP receptors or thromboxane-prostanoid receptors of the platelets, respectively. Does not interact with integrins alpha-IIb (ITGA2B) or beta-3 (ITGB3) nor platelet glycoproteins VI (GP6) or IX (GP9) in vitro, however, the detection is dependent on experimental conditions and may happen in vivo. Able to bind to platelet glycoprotein Ib alpha chain (GP1BA) receptor in vitro, although this interaction may have pathologically only limited effect in vivo as it is not able to abolish the von Willebrand factor (vWF)-dependent platelet agglutination induced by ristocetin. Does not affect blood coagulation. This chain is Disintegrin-like/cysteine-rich protein MPIII-3, found in Vipera ammodytes ammodytes (Western sand viper).